The sequence spans 132 residues: Small ribosomal subunit protein uS8 (132 aa).

The protein belongs to the universal ribosomal protein uS8 family. In terms of assembly, part of the 30S ribosomal subunit. Contacts proteins S5 and S12.

One of the primary rRNA binding proteins, it binds directly to 16S rRNA central domain where it helps coordinate assembly of the platform of the 30S subunit. The polypeptide is Small ribosomal subunit protein uS8 (Francisella tularensis subsp. tularensis (strain FSC 198)).